We begin with the raw amino-acid sequence, 316 residues long: tRNA dimethylallyltransferase (316 aa).

17–24 (GPTASGKT) lines the ATP pocket. Residue 19 to 24 (TASGKT) participates in substrate binding. 4 interaction with substrate tRNA regions span residues 42–45 (DSAL), 166–170 (QRLSR), 247–252 (RCVGYR), and 280–287 (KRQITWLR).

The protein belongs to the IPP transferase family. In terms of assembly, monomer. Mg(2+) is required as a cofactor.

The enzyme catalyses adenosine(37) in tRNA + dimethylallyl diphosphate = N(6)-dimethylallyladenosine(37) in tRNA + diphosphate. Functionally, catalyzes the transfer of a dimethylallyl group onto the adenine at position 37 in tRNAs that read codons beginning with uridine, leading to the formation of N6-(dimethylallyl)adenosine (i(6)A). This Escherichia coli O157:H7 protein is tRNA dimethylallyltransferase.